The following is a 517-amino-acid chain: Benzoate 4-monooxygenase bphA (517 aa).

The chain crosses the membrane as a helical span at residues 4–24; the sequence is LLLSPYGAYLGLALLVLYYLL. N-linked (GlcNAc...) asparagine glycans are attached at residues asparagine 282 and asparagine 325. Cysteine 461 is a binding site for heme.

The protein belongs to the cytochrome P450 family. It depends on heme as a cofactor.

The protein localises to the membrane. The catalysed reaction is benzoate + reduced [NADPH--hemoprotein reductase] + O2 = 4-hydroxybenzoate + oxidized [NADPH--hemoprotein reductase] + H2O + H(+). Its function is as follows. Cytochrome P450 monooxygenase; part of the benzoic acid degradation pathway also known as the protocatechuic acid pathway. Benzoic acid debradation begins with the conversion of benzoic acid into 4-hydroxybenzoic acid through hydroxylation by the benzoate-4-monooxygenase bphA, and its partner NADPH-cytochrome P450 reductase cprA which act as a mediator in electron donation from NADPH. 4-Hydroxybenzoic acid is then converted into 3,4-dihydroxybenzoic acid (also called protocatechuic acid) by the p-hydroxybenzoate-m-hydroxylase phhA. Protocatechuic acid is converted into 3-carboxy-cis,cis-muconic acid by the intradiol ring-cleavage dioxygenase prcA, which is further metabolized through the 3-oxoadipate pathway to finally enter the tricarboxylic acid cycle (TCA). The chain is Benzoate 4-monooxygenase bphA from Aspergillus niger (strain ATCC MYA-4892 / CBS 513.88 / FGSC A1513).